We begin with the raw amino-acid sequence, 292 residues long: Protease HtpX (292 aa).

The next 2 membrane-spanning stretches (helical) occupy residues valine 5–valine 25 and serine 34–leucine 54. Histidine 140 provides a ligand contact to Zn(2+). The active site involves glutamate 141. Histidine 144 lines the Zn(2+) pocket. The next 2 helical transmembrane spans lie at leucine 155–isoleucine 175 and isoleucine 193–phenylalanine 213. A Zn(2+)-binding site is contributed by glutamate 218.

It belongs to the peptidase M48B family. Requires Zn(2+) as cofactor.

Its subcellular location is the cell inner membrane. This is Protease HtpX from Xanthomonas campestris pv. campestris (strain B100).